The following is a 553-amino-acid chain: MDEVDKIIMHQLHQVDAAIEPTEELSGFTPEQVVRAVSGCLAEISPDLQLPRTLPGGAMAQRFGVASSLAQGCKDSGYRGDIGYQTFLYPNAVELRRLLMFLIEQLPRERQSAEDGASKSQTLSHRQLLERKIRKELAQQLKTPWVPQFARSVGNRKLLGCSSLGIEFRPNINLNIPSANPEERSKEQQQYLDQQAPNLFQQTASSSADLIASVLHKNELDRWDQTLSDSTLLFVDSEEPAPPPISTVKPDASAEEEASPIQELSDQVEELRVQCETLLAERKAHAVAIAALKQRETKASEEISRIQPTLKLHERTSLVLADSEENLTKLEALLKSTQSKRITLTQQWQDYRKPLLESLEKLKTAKEAQEVQGIRNNIEQLEQELLAKTQQHNELNATLRNASQSLAPRKEYTRRIHEFIGNIRKQRADIYKVLDDTRQLQKQLNVVGAQLQRQFNYTDDLLFQSAKHDLHAKRAYKLLAQLHANCNELVECVSLTGNVTKQIRELEVQIDGEKLKNVLTSLQQITGDIQKFEQHIQELQEQIRTVEQPNAGS.

The disordered stretch occupies residues aspartate 236–leucine 264. 3 coiled-coil regions span residues isoleucine 261 to alanine 286, glutamate 314 to alanine 407, and asparagine 498 to proline 549.

It belongs to the CCDC22 family.

This chain is Coiled-coil domain-containing protein 22 homolog, found in Drosophila erecta (Fruit fly).